Reading from the N-terminus, the 67-residue chain is Myrmicitoxin(1)-Pm6a (67 aa).

The N-terminal stretch at 1-25 (MRSLYLSFSLTIIFVLVIMHAEAKA) is a signal peptide. The propeptide occupies 26-37 (ISEPNAIAEADP). Valine 66 bears the Valine amide mark.

This sequence belongs to the formicidae venom clade 3 family. Expressed by the venom gland.

Its subcellular location is the secreted. Functionally, toxin that causes a rapid and irreversible paralysis when intrathoracically injected into insects (blowflies). Does not cause spontaneous nocifensive behaviors by intraplantar injection in mice. Exhibits hemolytic and cytotoxic activities on HEK293 cells. This is Myrmicitoxin(1)-Pm6a from Pogonomyrmex maricopa (Maricopa harvester ant).